We begin with the raw amino-acid sequence, 105 residues long: Protein RALF-like 21 (105 aa).

The N-terminal stretch at methionine 1–glycine 30 is a signal peptide. Intrachain disulfides connect cysteine 44/cysteine 53 and cysteine 67/cysteine 73.

It belongs to the plant rapid alkalinization factor (RALF) family. As to expression, expressed in seeds and rosettes.

It localises to the secreted. In terms of biological role, cell signaling peptide that may regulate plant stress, growth, and development. Mediates a rapid alkalinization of extracellular space by mediating a transient increase in the cytoplasmic Ca(2+) concentration leading to a calcium-dependent signaling events through a cell surface receptor and a concomitant activation of some intracellular mitogen-activated protein kinases. This chain is Protein RALF-like 21 (RALFL21), found in Arabidopsis thaliana (Mouse-ear cress).